The following is a 691-amino-acid chain: Gex-3-interacting protein 13 (691 aa).

Disordered regions lie at residues 18–97 (TASL…SAHL) and 171–195 (PASPCTTAASAPSVESTPTKRKRQR). Residues 31-46 (SSFTTTSESTSPPYSS) are compositionally biased toward low complexity. Positions 47–57 (SEHHSPTDQRT) are enriched in basic and acidic residues. Polar residues predominate over residues 58 to 79 (ETPTSDSGNASFSPENVATSFE). Residues 171 to 183 (PASPCTTAASAPS) are compositionally biased toward low complexity. 2 consecutive BED-type zinc fingers follow at residues 194–242 (QRRN…YEKV) and 424–473 (LRRH…YEKV). Residues Cys-212, Cys-215, His-230, His-235, Cys-443, Cys-446, His-461, and His-466 each contribute to the Zn(2+) site.

Interacts with gex-3.

This Caenorhabditis elegans protein is Gex-3-interacting protein 13 (gei-13).